Consider the following 361-residue polypeptide: MFKRHKSLERKRELLFQGLPQSTMKNNARNFHSLSQLVLSAGPLKTTTAVKHSKTTHFEIEILDAHTRKQICIVDKVTQTSTIHDVKQKFHKACPKWYPSRIGLQLEYGGPYLRDYITVQSVAASSIITLYFTDLGQQVGWTTVFLAEYSGPLLIYLLFYLRSSYIYDVKESTRWPRHPVVHLAFFCHCIHYIRLLLETLFVHKVSTGHSPMKNLIKGCAFYWGFTSWMAYYINHPRYTPPSFGNRQVIVSAINFLFCEAGNHFINTVLAHPNHTGSNACFPSPNYNPFTWLFFLVSCPNYTYEIGSWISFTVMTQTLPVGIFTILMTIQMSLWARKKHKIYRKKFNSYVHRKSAIIPLIL.

Ser33 and Ser35 each carry phosphoserine. 4 consecutive transmembrane segments (helical) span residues 139-159 (VGWT…YLLF), 181-201 (VHLA…ETLF), 215-235 (LIKG…YINH), and 309-329 (ISFT…LMTI).

It belongs to the steroid 5-alpha reductase family. Expression is highest in the heart with very low to almost undetectable levels in brain, skeletal muscle, stomach, pancreas, liver, kidney, small intestine, and uterus.

It localises to the membrane. The protein localises to the endoplasmic reticulum. This Mus musculus (Mouse) protein is Trans-2,3-enoyl-CoA reductase-like (Tecrl).